Consider the following 274-residue polypeptide: Syntaxin-12 (274 aa).

The disordered stretch occupies residues 1–20 (MSYGPLDMYRNPGPSGPQPR). Ser2 is modified (N-acetylserine). Residues 2 to 250 (SYGPLDMYRN…AYYQKKSRKK (249 aa)) lie on the Cytoplasmic side of the membrane. The stretch at 34–80 (QRISQATAQIKNLMSQLGTKQDSSKLQENLQQFQHSTNQLAKETNEL) forms a coiled coil. The disordered stretch occupies residues 128–150 (EKESIARARAGSRLSAEDRQREE). Phosphoserine occurs at positions 139, 142, 218, and 225. One can recognise a t-SNARE coiled-coil homology domain in the interval 178–240 (LELIKERETA…ERASDQLQRA (63 aa)). Residues 251-271 (MCILVLVLSVIVTVLVVVIWV) form a helical; Anchor for type IV membrane protein membrane-spanning segment. The Vesicular segment spans residues 272-274 (ASK).

The protein belongs to the syntaxin family. As to quaternary structure, associates with the BLOC-1 complex. Interacts with BLOC1S6. Interacts with NAPA and SNAP23. Identified in a complex containing STX6, STX12, VAMP4 and VTI1A. Interacts with GRIPAP1. Forms a complex with GRIP1, GRIA2 and NSG1; controls the intracellular fate of AMPAR and the endosomal sorting of the GRIA2 subunit toward recycling and membrane targeting. Interacts with NSG1. Interacts with TPC1. Interacts (via N-terminus) with VPS13B. Ubiquitous. Highly expressed in brain.

It localises to the endosome membrane. The protein localises to the golgi apparatus membrane. The protein resides in the endomembrane system. It is found in the early endosome membrane. Its subcellular location is the recycling endosome membrane. Its function is as follows. SNARE promoting fusion of transport vesicles with target membranes. Together with SNARE STX6, promotes movement of vesicles from endosomes to the cell membrane, and may therefore function in the endocytic recycling pathway. Through complex formation with GRIP1, GRIA2 and NSG1 controls the intracellular fate of AMPAR and the endosomal sorting of the GRIA2 subunit toward recycling and membrane targeting. In Rattus norvegicus (Rat), this protein is Syntaxin-12 (Stx12).